Reading from the N-terminus, the 263-residue chain is Triosephosphate isomerase (263 aa).

Residue 10 to 12 participates in substrate binding; sequence NWK. His-104 serves as the catalytic Electrophile. Glu-176 acts as the Proton acceptor in catalysis. Residues Gly-182, Ser-221, and 242-243 contribute to the substrate site; that span reads GG.

It belongs to the triosephosphate isomerase family. As to quaternary structure, homodimer.

It is found in the cytoplasm. The catalysed reaction is D-glyceraldehyde 3-phosphate = dihydroxyacetone phosphate. It functions in the pathway carbohydrate biosynthesis; gluconeogenesis. The protein operates within carbohydrate degradation; glycolysis; D-glyceraldehyde 3-phosphate from glycerone phosphate: step 1/1. Functionally, involved in the gluconeogenesis. Catalyzes stereospecifically the conversion of dihydroxyacetone phosphate (DHAP) to D-glyceraldehyde-3-phosphate (G3P). The polypeptide is Triosephosphate isomerase (Haemophilus influenzae (strain 86-028NP)).